We begin with the raw amino-acid sequence, 144 residues long: Large ribosomal subunit protein uL15 (144 aa).

A disordered region spans residues 1–54; the sequence is MRLNTLSPAEGSKKAGKRLGRGIGSGLGKTGGRGHKGQNSRSGGGVRRGFEGGQ. Residues 21–31 are compositionally biased toward gly residues; sequence RGIGSGLGKTG.

Belongs to the universal ribosomal protein uL15 family. Part of the 50S ribosomal subunit.

Functionally, binds to the 23S rRNA. The chain is Large ribosomal subunit protein uL15 from Enterobacter sp. (strain 638).